Consider the following 528-residue polypeptide: Protein MGF 505-7R (528 aa).

ANK repeat units lie at residues 129–158 (ECDL…LLNV), 261–290 (HVNR…VPHK), and 292–322 (IERM…KVKN).

This sequence belongs to the asfivirus MGF 505 family. In terms of assembly, interacts with host STING1. Interacts with host JAK1; this interaction leads to JAK1 degradation. Interacts with host JAK2; this interaction leads to JAK2 degradation. Interacts with host RELA; this interaction inhibits NF-kappa-B promoter activity.

The protein localises to the host cytoplasm. Its function is as follows. Plays a role in virus cell tropism, and may be required for efficient virus replication in macrophages. Interferes with host NF-kappa-B promoter activity mediated by TLR8. Mechanistically, inhibits the phosphorylation and subsequent nuclear translocation of host NF-kappa-B RELA subunit downstream of TLR8. Promotes the expression of the autophagy-related protein host ULK1 to degrade host STING and inhibit the interferon response. Also inhibits JAK1- and JAK2-mediated signaling and thus negatively regulates the IFN-gamma signaling. In Ornithodoros (relapsing fever ticks), this protein is Protein MGF 505-7R.